We begin with the raw amino-acid sequence, 218 residues long: MPRERLLSHGAKSLSNTELLAILINTGRKGFSSIDISNELLKSASNLNELKKSSINDLIKVKGIGLQKAITLKAAFELGERMGRRAENNRIKITQPSDVADYMIPTMKDLTQEHFVILLLNSKNVVIKETCVFKGTLNSSIVHPREIFSIAVRENANAIIAVHNHPSGDVTPSQEDIITTMRLKECGLILGIDLLDHIIIGDNRFTSLVEAGYFDEND.

An MPN domain is found at 92 to 214 (KITQPSDVAD…FTSLVEAGYF (123 aa)). Positions 163, 165, and 176 each coordinate Zn(2+). A JAMM motif motif is present at residues 163–176 (HNHPSGDVTPSQED).

It belongs to the UPF0758 family.

The sequence is that of UPF0758 protein SAUSA300_1608 from Staphylococcus aureus (strain USA300).